Consider the following 294-residue polypeptide: Oligopeptide transport system permease protein OppC (294 aa).

6 helical membrane-spanning segments follow: residues 27-47 (MIST…SMFL), 94-114 (IAFA…VITG), 127-147 (FTDF…VTII), 151-171 (NSWS…TRLI), 202-224 (IWPN…NIGL), and 260-280 (WTWV…IFIG). Residues 88–280 (ARNSFNIAFA…IVVLAIIFIG (193 aa)) form the ABC transmembrane type-1 domain.

The protein belongs to the binding-protein-dependent transport system permease family. OppBC subfamily. In terms of assembly, the complex is composed of two ATP-binding proteins (OppD and OppF), two transmembrane proteins (OppB and OppC) and a solute-binding protein (OppA).

It localises to the cell membrane. Part of the ABC transporter complex OppABCDF involved in the uptake of oligopeptides. Probably responsible for the translocation of the substrate across the membrane. Essential for uptake of peptides larger than three amino acids and for growth in milk. This chain is Oligopeptide transport system permease protein OppC (oppC), found in Lactococcus lactis subsp. lactis (strain IL1403) (Streptococcus lactis).